We begin with the raw amino-acid sequence, 210 residues long: Large ribosomal subunit protein uL3 (210 aa).

It belongs to the universal ribosomal protein uL3 family. Part of the 50S ribosomal subunit. Forms a cluster with proteins L14 and L19.

Its function is as follows. One of the primary rRNA binding proteins, it binds directly near the 3'-end of the 23S rRNA, where it nucleates assembly of the 50S subunit. This is Large ribosomal subunit protein uL3 from Geobacter sulfurreducens (strain ATCC 51573 / DSM 12127 / PCA).